The sequence spans 201 residues: Proteasome subunit beta 1 (201 aa).

A propeptide (removed in mature form; by autocatalysis) is located at residue methionine 1. Threonine 2 acts as the Nucleophile in catalysis.

This sequence belongs to the peptidase T1B family. In terms of assembly, the 20S proteasome core is composed of 14 alpha and 14 beta subunits that assemble into four stacked heptameric rings, resulting in a barrel-shaped structure. The two inner rings, each composed of seven catalytic beta subunits, are sandwiched by two outer rings, each composed of seven alpha subunits. The catalytic chamber with the active sites is on the inside of the barrel. Has a gated structure, the ends of the cylinder being occluded by the N-termini of the alpha-subunits. Is capped at one or both ends by the proteasome regulatory ATPase, PAN.

The protein resides in the cytoplasm. The enzyme catalyses Cleavage of peptide bonds with very broad specificity.. With respect to regulation, the formation of the proteasomal ATPase PAN-20S proteasome complex, via the docking of the C-termini of PAN into the intersubunit pockets in the alpha-rings, triggers opening of the gate for substrate entry. Interconversion between the open-gate and close-gate conformations leads to a dynamic regulation of the 20S proteasome proteolysis activity. Functionally, component of the proteasome core, a large protease complex with broad specificity involved in protein degradation. The sequence is that of Proteasome subunit beta 1 from Pyrobaculum calidifontis (strain DSM 21063 / JCM 11548 / VA1).